The following is a 264-amino-acid chain: Chymotrypsin-like protease CTRL-1 (264 aa).

An N-terminal signal peptide occupies residues 1-18 (MLLLSLTLSLVLLGSSWG). A propeptide spans 19 to 33 (CGIPAIKPALSFSQR) (activation peptide). 5 disulfide bridges follow: Cys19–Cys141, Cys60–Cys76, Cys155–Cys220, Cys187–Cys201, and Cys210–Cys239. Residues 34–262 (IVNGENAVLG…FSTWINQVIA (229 aa)) form the Peptidase S1 domain. His75 functions as the Charge relay system in the catalytic mechanism. Asn114 carries an N-linked (GlcNAc...) asparagine glycan. Asp121 functions as the Charge relay system in the catalytic mechanism. Ser214 (charge relay system) is an active-site residue.

The protein belongs to the peptidase S1 family.

This is Chymotrypsin-like protease CTRL-1 (CTRL) from Homo sapiens (Human).